We begin with the raw amino-acid sequence, 563 residues long: Tripeptidyl-peptidase 1 (563 aa).

The first 19 residues, 1 to 19 (MGLQACLLGLFALILSGKC), serve as a signal peptide directing secretion. A propeptide spans 20–195 (SYSPEPDQRR…PEPQVTGTVG (176 aa)) (removed in mature form). Residues C111 and C122 are joined by a disulfide bond. The Peptidase S53 domain occupies 199–563 (GVTPSVIRKR…PALLKTLLNP (365 aa)). N210 and N222 each carry an N-linked (GlcNAc...) asparagine glycan. Residues E272 and D276 each act as charge relay system in the active site. N-linked (GlcNAc...) asparagine glycosylation is found at N286, N313, and N443. 2 cysteine pairs are disulfide-bonded: C365–C526 and C522–C537. Residue S475 is the Charge relay system of the active site. D517 and V518 together coordinate Ca(2+). 3 residues coordinate Ca(2+): G539, G541, and D543.

Monomer. Interacts with CLN5. Interacts with CLN3. Ca(2+) is required as a cofactor. Activated by autocatalytic proteolytical processing upon acidification. N-glycosylation is required for processing and activity.

It is found in the lysosome. It localises to the melanosome. The catalysed reaction is Release of an N-terminal tripeptide from a polypeptide, but also has endopeptidase activity.. In terms of biological role, lysosomal serine protease with tripeptidyl-peptidase I activity. May act as a non-specific lysosomal peptidase which generates tripeptides from the breakdown products produced by lysosomal proteinases. Requires substrates with an unsubstituted N-terminus. This is Tripeptidyl-peptidase 1 (TPP1) from Macaca fascicularis (Crab-eating macaque).